The primary structure comprises 644 residues: DNA mismatch repair protein MutL (644 aa).

This sequence belongs to the DNA mismatch repair MutL/HexB family.

In terms of biological role, this protein is involved in the repair of mismatches in DNA. It is required for dam-dependent methyl-directed DNA mismatch repair. May act as a 'molecular matchmaker', a protein that promotes the formation of a stable complex between two or more DNA-binding proteins in an ATP-dependent manner without itself being part of a final effector complex. The polypeptide is DNA mismatch repair protein MutL (Chlorobium chlorochromatii (strain CaD3)).